We begin with the raw amino-acid sequence, 165 residues long: Protein C2-DOMAIN ABA-RELATED 8 (165 aa).

Methionine 1 bears the N-acetylmethionine mark. The 106-residue stretch at 1-106 (MENLVGLLRI…QGTDIQELTN (106 aa)) folds into the C2 domain. Ca(2+) contacts are provided by arginine 21, aspartate 22, aspartate 27, aspartate 73, lysine 74, aspartate 75, and aspartate 81.

Belongs to the plant CAR protein family. As to quaternary structure, binds to PYR/PYL/RCAR abscisic acid intracellular receptors in an ABA-independent manner, both at the plasma membrane and in the nucleus.

Its subcellular location is the cell membrane. The protein resides in the nucleus. Functionally, stimulates the GTPase/ATPase activities of Obg-like ATPases. Mediates the transient calcium-dependent interaction of PYR/PYL/RCAR abscisic acid (ABA) receptors with the plasma membrane and thus regulates ABA sensitivity. The sequence is that of Protein C2-DOMAIN ABA-RELATED 8 from Arabidopsis thaliana (Mouse-ear cress).